We begin with the raw amino-acid sequence, 156 residues long: Gamma-L-glutamyl-butirosin B gamma-glutamyl cyclotransferase (156 aa).

24-27 contributes to the substrate binding site; sequence YGTL. Glu89 functions as the Proton acceptor in the catalytic mechanism.

The protein belongs to the gamma-glutamylcyclotransferase family.

It carries out the reaction gamma-L-glutamyl-butirosin B = butirosin B + 5-oxo-L-proline. It participates in antibiotic biosynthesis; butirosin biosynthesis. Its function is as follows. Cyclotransferase that catalyzes the last step in the biosynthesis of the aminoglycoside antibiotic butirosin B. Cleaves the amide bond via transamidation using the alpha-amine of the terminal gamma-L-glutamate of the side chain, releasing it as the cyclic 5-oxoproline. The polypeptide is Gamma-L-glutamyl-butirosin B gamma-glutamyl cyclotransferase (btrG) (Niallia circulans (Bacillus circulans)).